We begin with the raw amino-acid sequence, 335 residues long: Protein-arginine kinase (335 aa).

A Phosphagen kinase C-terminal domain is found at isoleucine 21–isoleucine 244. Residues serine 24 to arginine 28, histidine 82, arginine 115, arginine 166 to methionine 170, and arginine 197 to glutamate 202 contribute to the ATP site.

The protein belongs to the ATP:guanido phosphotransferase family.

The enzyme catalyses L-arginyl-[protein] + ATP = N(omega)-phospho-L-arginyl-[protein] + ADP + H(+). In terms of biological role, catalyzes the specific phosphorylation of arginine residues in proteins. The protein is Protein-arginine kinase of Staphylococcus aureus (strain USA300).